Here is a 668-residue protein sequence, read N- to C-terminus: DNA-directed RNA polymerase subunit beta' (668 aa).

Zn(2+) is bound by residues Cys-71, Cys-73, Cys-91, and Cys-94. The Mg(2+) site is built by Asp-505, Asp-507, and Asp-509.

It belongs to the RNA polymerase beta' chain family. RpoC1 subfamily. In plastids the minimal PEP RNA polymerase catalytic core is composed of four subunits: alpha, beta, beta', and beta''. When a (nuclear-encoded) sigma factor is associated with the core the holoenzyme is formed, which can initiate transcription. It depends on Mg(2+) as a cofactor. Requires Zn(2+) as cofactor.

It is found in the plastid. The protein resides in the chloroplast. The catalysed reaction is RNA(n) + a ribonucleoside 5'-triphosphate = RNA(n+1) + diphosphate. In terms of biological role, DNA-dependent RNA polymerase catalyzes the transcription of DNA into RNA using the four ribonucleoside triphosphates as substrates. This is DNA-directed RNA polymerase subunit beta' from Mesostigma viride (Green alga).